We begin with the raw amino-acid sequence, 126 residues long: Putative gene 48 protein (126 aa).

The chain is Putative gene 48 protein (48) from Bacillus phage SP01 (Bacteriophage SP01).